The following is a 300-amino-acid chain: N-acetylmuramic acid 6-phosphate etherase (300 aa).

Residues valine 57–lysine 220 enclose the SIS domain. Glutamate 85 serves as the catalytic Proton donor. Residue glutamate 116 is part of the active site.

Belongs to the GCKR-like family. MurNAc-6-P etherase subfamily. In terms of assembly, homodimer.

The enzyme catalyses N-acetyl-D-muramate 6-phosphate + H2O = N-acetyl-D-glucosamine 6-phosphate + (R)-lactate. Its pathway is amino-sugar metabolism; N-acetylmuramate degradation. It participates in amino-sugar metabolism; 1,6-anhydro-N-acetylmuramate degradation. The protein operates within cell wall biogenesis; peptidoglycan recycling. In terms of biological role, specifically catalyzes the cleavage of the D-lactyl ether substituent of MurNAc 6-phosphate, producing GlcNAc 6-phosphate and D-lactate. Together with AnmK, is also required for the utilization of anhydro-N-acetylmuramic acid (anhMurNAc) either imported from the medium or derived from its own cell wall murein, and thus plays a role in cell wall recycling. The polypeptide is N-acetylmuramic acid 6-phosphate etherase (Edwardsiella ictaluri (strain 93-146)).